Here is a 227-residue protein sequence, read N- to C-terminus: Urease accessory protein UreF (227 aa).

This sequence belongs to the UreF family. In terms of assembly, ureD, UreF and UreG form a complex that acts as a GTP-hydrolysis-dependent molecular chaperone, activating the urease apoprotein by helping to assemble the nickel containing metallocenter of UreC. The UreE protein probably delivers the nickel.

It is found in the cytoplasm. Functionally, required for maturation of urease via the functional incorporation of the urease nickel metallocenter. The sequence is that of Urease accessory protein UreF from Methylobacillus flagellatus (strain ATCC 51484 / DSM 6875 / VKM B-1610 / KT).